The following is a 261-amino-acid chain: (R)-S-adenosyl-L-methionine hydrolase (261 aa).

Positions 12, 72, and 187 each coordinate adenosine. The (R)-S-adenosyl-L-methionine site is built by asparagine 187, serine 231, and valine 239. Valine 239 is an adenosine binding site.

Belongs to the SAM hydrolase / SAM-dependent halogenase family.

It catalyses the reaction (R)-S-adenosyl-L-methionine + H2O = adenosine + L-methionine + H(+). Functionally, specifically hydrolyzes (R)-S-adenosyl-L-methionine ((R)-SAM), the inactive form of the ubiquitous cofactor SAM, into adenosine and L-methionine. Is stereoselective as it cannot use the active form of SAM, (S)-S-adenosyl-L-methionine, as substrate. Likely plays a role in preventing accumulation of (R)-S-adenosyl-L-methionine in cells; maintenance of (S)-S-denosyl-L-methionine homochirality is important for cellular health given that the (R)-form is largely inactive as a methyl donor and can function as an inhibitor of methyltransferases. This is (R)-S-adenosyl-L-methionine hydrolase from Salinispora tropica (strain ATCC BAA-916 / DSM 44818 / JCM 13857 / NBRC 105044 / CNB-440).